A 469-amino-acid polypeptide reads, in one-letter code: MAIYITNTESGKKEKLVPNTPGVVKMYVCGPTVYNYIHIGNARPAVVFDAFRRFLEYRGYKVVMVQNFTDIDDKIINEANAWGVNFKDVADTFIAEYWKDAENLGIRAANFHPRTTDYVKEIVEAVEKLIAKNYAYVADNGDVYFSVKEFKDYGKLSGKKLEDLVAGARVEVSELKKNPLDFALWKAVKPGEPSWDSPWGNGRPGWHIECSVMSQRLLGDSFDIHAGGEDLIFPHHEDEKAQSEALTGKPFAKYWMHNGMIITRGDKMSKSIGNVFLVREAVKRYGKDAVKLFLLSKHYRTPIEFSHEIMFNTKKAALRILNTLNRFEEKYPYPLVPKRDTFMNDMEARFVEALEDDFNTPRVIALIFELSKDLNKAMDEGKEEEALKRYHLITRVFGSVLGIFERGLKVVETNNQKIIEEILSVRQELRKEKDYNVADKIRDALLRAGVKILDTSEGTKWEMNTEVDE.

A Zn(2+)-binding site is contributed by Cys29. Positions 31–41 (PTVYNYIHIGN) match the 'HIGH' region motif. The Zn(2+) site is built by Cys210, His235, and Glu239. The short motif at 267–271 (KMSKS) is the 'KMSKS' region element. Position 270 (Lys270) interacts with ATP.

This sequence belongs to the class-I aminoacyl-tRNA synthetase family. As to quaternary structure, monomer. Requires Zn(2+) as cofactor.

Its subcellular location is the cytoplasm. The enzyme catalyses tRNA(Cys) + L-cysteine + ATP = L-cysteinyl-tRNA(Cys) + AMP + diphosphate. This is Cysteine--tRNA ligase from Thermosipho melanesiensis (strain DSM 12029 / CIP 104789 / BI429).